A 312-amino-acid polypeptide reads, in one-letter code: Acetyl-coenzyme A carboxylase carboxyl transferase subunit alpha (312 aa).

One can recognise a CoA carboxyltransferase C-terminal domain in the interval 32–286; the sequence is LLEERLARLR…KEALLKALEE (255 aa).

The protein belongs to the AccA family. Acetyl-CoA carboxylase is a heterohexamer composed of biotin carboxyl carrier protein (AccB), biotin carboxylase (AccC) and two subunits each of ACCase subunit alpha (AccA) and ACCase subunit beta (AccD).

The protein localises to the cytoplasm. It carries out the reaction N(6)-carboxybiotinyl-L-lysyl-[protein] + acetyl-CoA = N(6)-biotinyl-L-lysyl-[protein] + malonyl-CoA. Its pathway is lipid metabolism; malonyl-CoA biosynthesis; malonyl-CoA from acetyl-CoA: step 1/1. In terms of biological role, component of the acetyl coenzyme A carboxylase (ACC) complex. First, biotin carboxylase catalyzes the carboxylation of biotin on its carrier protein (BCCP) and then the CO(2) group is transferred by the carboxyltransferase to acetyl-CoA to form malonyl-CoA. In Thermus thermophilus (strain ATCC BAA-163 / DSM 7039 / HB27), this protein is Acetyl-coenzyme A carboxylase carboxyl transferase subunit alpha.